Consider the following 257-residue polypeptide: Imidazole glycerol phosphate synthase subunit HisF (257 aa).

Active-site residues include Asp-11 and Asp-130.

Belongs to the HisA/HisF family. In terms of assembly, heterodimer of HisH and HisF.

The protein resides in the cytoplasm. It carries out the reaction 5-[(5-phospho-1-deoxy-D-ribulos-1-ylimino)methylamino]-1-(5-phospho-beta-D-ribosyl)imidazole-4-carboxamide + L-glutamine = D-erythro-1-(imidazol-4-yl)glycerol 3-phosphate + 5-amino-1-(5-phospho-beta-D-ribosyl)imidazole-4-carboxamide + L-glutamate + H(+). Its pathway is amino-acid biosynthesis; L-histidine biosynthesis; L-histidine from 5-phospho-alpha-D-ribose 1-diphosphate: step 5/9. Functionally, IGPS catalyzes the conversion of PRFAR and glutamine to IGP, AICAR and glutamate. The HisF subunit catalyzes the cyclization activity that produces IGP and AICAR from PRFAR using the ammonia provided by the HisH subunit. The protein is Imidazole glycerol phosphate synthase subunit HisF of Francisella philomiragia subsp. philomiragia (strain ATCC 25017 / CCUG 19701 / FSC 153 / O#319-036).